Reading from the N-terminus, the 322-residue chain is tRNA-dihydrouridine synthase B (322 aa).

FMN contacts are provided by residues 16–18 (PMA) and Gln70. Residue Cys100 is the Proton donor of the active site. FMN is bound by residues Lys139, 200–202 (NGD), and 224–225 (GR).

Belongs to the Dus family. DusB subfamily. FMN is required as a cofactor.

The enzyme catalyses a 5,6-dihydrouridine in tRNA + NAD(+) = a uridine in tRNA + NADH + H(+). It carries out the reaction a 5,6-dihydrouridine in tRNA + NADP(+) = a uridine in tRNA + NADPH + H(+). Functionally, catalyzes the synthesis of 5,6-dihydrouridine (D), a modified base found in the D-loop of most tRNAs, via the reduction of the C5-C6 double bond in target uridines. This chain is tRNA-dihydrouridine synthase B, found in Vibrio vulnificus (strain CMCP6).